Consider the following 204-residue polypeptide: bMERB domain-containing protein 1 (204 aa).

A bMERB domain is found at 3–150 (LKQSLSTHLE…EQEEDKEMAD (148 aa)). A disordered region spans residues 162 to 187 (VTKSPASSRAEKKAEPPPSKPTVAKT).

The polypeptide is bMERB domain-containing protein 1 (Homo sapiens (Human)).